The sequence spans 816 residues: uncharacterized protein (816 aa).

NADP(+) is bound at residue 503–534 (DTWTVITGGTDGIGKAYIEELCKTRGLKKFYL). Residue S641 coordinates substrate. Y661 (proton acceptor) is an active-site residue. 2 helical membrane-spanning segments follow: residues 743–763 (FGFS…SIVL) and 777–797 (VFII…FLLN).

This sequence belongs to the short-chain dehydrogenases/reductases (SDR) family.

The protein localises to the membrane. This is an uncharacterized protein from Caenorhabditis elegans.